The chain runs to 434 residues: Enolase (434 aa).

Gln167 serves as a coordination point for (2R)-2-phosphoglycerate. The active-site Proton donor is Glu209. Mg(2+) contacts are provided by Asp246, Glu291, and Asp318. (2R)-2-phosphoglycerate is bound by residues Lys343, Arg372, Ser373, and Lys394. Catalysis depends on Lys343, which acts as the Proton acceptor.

This sequence belongs to the enolase family. Component of the RNA degradosome, a multiprotein complex involved in RNA processing and mRNA degradation. Requires Mg(2+) as cofactor.

It is found in the cytoplasm. The protein localises to the secreted. It localises to the cell surface. The catalysed reaction is (2R)-2-phosphoglycerate = phosphoenolpyruvate + H2O. It participates in carbohydrate degradation; glycolysis; pyruvate from D-glyceraldehyde 3-phosphate: step 4/5. Catalyzes the reversible conversion of 2-phosphoglycerate (2-PG) into phosphoenolpyruvate (PEP). It is essential for the degradation of carbohydrates via glycolysis. The sequence is that of Enolase from Buchnera aphidicola subsp. Acyrthosiphon pisum (strain 5A).